The following is a 620-amino-acid chain: Chaperone protein HscA homolog (620 aa).

This sequence belongs to the heat shock protein 70 family.

Its function is as follows. Chaperone involved in the maturation of iron-sulfur cluster-containing proteins. Has a low intrinsic ATPase activity which is markedly stimulated by HscB. The polypeptide is Chaperone protein HscA homolog (Shewanella sp. (strain MR-7)).